Reading from the N-terminus, the 49-residue chain is Small, acid-soluble spore protein O (49 aa).

A disordered region spans residues 1–49 (MGKRKANHTISGMNAASAQGQGAGYNEEFANENLTAAERQNNKKRKKNQ). The segment covering 8-20 (HTISGMNAASAQG) has biased composition (polar residues).

The protein belongs to the SspO family.

The protein resides in the spore core. The polypeptide is Small, acid-soluble spore protein O (Bacillus cereus (strain AH187)).